The following is a 525-amino-acid chain: Probable protein kinase UbiB (525 aa).

Residues 119-501 (RFDHHPVASA…QRRTNRLLSA (383 aa)) form the Protein kinase domain. ATP contacts are provided by residues 125 to 133 (VASASIAQV) and K151. The Proton acceptor role is filled by D286. Residues 502-522 (ALLFIGGFAVGIIATHVLAWL) traverse the membrane as a helical segment.

The protein belongs to the ABC1 family. UbiB subfamily.

Its subcellular location is the cell inner membrane. It participates in cofactor biosynthesis; ubiquinone biosynthesis [regulation]. Its function is as follows. Is probably a protein kinase regulator of UbiI activity which is involved in aerobic coenzyme Q (ubiquinone) biosynthesis. This chain is Probable protein kinase UbiB, found in Ralstonia nicotianae (strain ATCC BAA-1114 / GMI1000) (Ralstonia solanacearum).